A 1699-amino-acid chain; its full sequence is Hybrid signal transduction histidine kinase E (1699 aa).

2 disordered regions span residues 1–32 (MDKL…NLEN) and 58–97 (NNII…NPNV). Positions 7–32 (NNNLSPPSSPSSSTTTPNLSSTNLEN) are enriched in low complexity. 6 helical membrane-spanning segments follow: residues 142–162 (CILL…LIFL), 164–184 (SFYP…IVST), 191–211 (LVAL…FLQI), 238–258 (LNFL…IFFP), 262–282 (FSIT…LISI), and 295–315 (NLIV…ILSI). Positions 412–432 (ITNGGNNKQTSTTSANSTPRY) are enriched in polar residues. Disordered stretches follow at residues 412–439 (ITNG…NNNN) and 542–593 (LLNN…NISN). Low complexity predominate over residues 544-593 (NNNNNNNNNNNNNNNNNNNNNNNNNNSNNNNNNNSNNNNNNNNINNNISN). Positions 678 to 950 (TVSHEVRTPI…AFSFTSILST (273 aa)) constitute a Histidine kinase domain. His-681 carries the post-translational modification Phosphohistidine; by autocatalysis. Disordered regions lie at residues 819–866 (NNNN…NNNN), 1018–1054 (NNNN…NDNN), 1186–1239 (KKQQ…RKSS), 1252–1294 (MVQV…NPNN), and 1351–1406 (SIPI…SPPP). A compositionally biased stretch (polar residues) spans 1198–1212 (MGDTLSSTKSPQYTN). The segment covering 1219 to 1239 (SSSSNGSLNKSNRSNLLRKSS) has biased composition (low complexity). Positions 1271–1282 (KGNNSNPNSTEL) are enriched in polar residues. Low complexity-rich tracts occupy residues 1283 to 1294 (NSTNSVNGNPNN) and 1355 to 1392 (NINN…NNNN). Residues 1575–1695 (NALIVDDTEL…TLKDTLLKWG (121 aa)) form the Response regulatory domain. A 4-aspartylphosphate modification is found at Asp-1625.

The protein resides in the membrane. The enzyme catalyses ATP + protein L-histidine = ADP + protein N-phospho-L-histidine.. Functionally, may act in a signal transduction pathway. This protein undergoes an ATP-dependent autophosphorylation at a conserved histidine residue in the kinase core, and a phosphoryl group is then transferred to a conserved aspartate residue in the receiver domain. In Dictyostelium discoideum (Social amoeba), this protein is Hybrid signal transduction histidine kinase E (dhkE).